The following is a 124-amino-acid chain: Large ribosomal subunit protein bL12 (124 aa).

It belongs to the bacterial ribosomal protein bL12 family. Homodimer. Part of the ribosomal stalk of the 50S ribosomal subunit. Forms a multimeric L10(L12)X complex, where L10 forms an elongated spine to which 2 to 4 L12 dimers bind in a sequential fashion. Binds GTP-bound translation factors.

Its function is as follows. Forms part of the ribosomal stalk which helps the ribosome interact with GTP-bound translation factors. Is thus essential for accurate translation. This chain is Large ribosomal subunit protein bL12, found in Cupriavidus pinatubonensis (strain JMP 134 / LMG 1197) (Cupriavidus necator (strain JMP 134)).